A 95-amino-acid polypeptide reads, in one-letter code: Large ribosomal subunit protein uL23 (95 aa).

It belongs to the universal ribosomal protein uL23 family. In terms of assembly, part of the 50S ribosomal subunit. Contacts protein L29 and trigger factor when it is bound to the ribosome.

One of the early assembly protein it binds 23S rRNA. One of the proteins that surrounds the polypeptide exit tunnel on the outside of the subunit. Forms the main docking site for trigger factor binding to the ribosome. This chain is Large ribosomal subunit protein uL23, found in Deinococcus radiodurans (strain ATCC 13939 / DSM 20539 / JCM 16871 / CCUG 27074 / LMG 4051 / NBRC 15346 / NCIMB 9279 / VKM B-1422 / R1).